The following is a 101-amino-acid chain: NAD(P)H-quinone oxidoreductase subunit 4L, chloroplastic (101 aa).

The next 3 membrane-spanning stretches (helical) occupy residues 2–22, 32–52, and 61–81; these read MLEHVLVLSAYLFSIGIYGLI, MCLELILNAVNLNFVTFSDFF, and IFSIFVIAIAAAEAAIGPAIV.

It belongs to the complex I subunit 4L family. NDH is composed of at least 16 different subunits, 5 of which are encoded in the nucleus.

The protein resides in the plastid. Its subcellular location is the chloroplast thylakoid membrane. The catalysed reaction is a plastoquinone + NADH + (n+1) H(+)(in) = a plastoquinol + NAD(+) + n H(+)(out). It catalyses the reaction a plastoquinone + NADPH + (n+1) H(+)(in) = a plastoquinol + NADP(+) + n H(+)(out). In terms of biological role, NDH shuttles electrons from NAD(P)H:plastoquinone, via FMN and iron-sulfur (Fe-S) centers, to quinones in the photosynthetic chain and possibly in a chloroplast respiratory chain. The immediate electron acceptor for the enzyme in this species is believed to be plastoquinone. Couples the redox reaction to proton translocation, and thus conserves the redox energy in a proton gradient. The protein is NAD(P)H-quinone oxidoreductase subunit 4L, chloroplastic of Manihot esculenta (Cassava).